We begin with the raw amino-acid sequence, 230 residues long: Ribonuclease 3 (230 aa).

In terms of domain architecture, RNase III spans 6–135; sequence VSELRARYGI…FNGALFLDQG (130 aa). Mg(2+) is bound at residue Glu-48. The active site involves Asp-52. Residues Asp-121 and Glu-124 each contribute to the Mg(2+) site. Glu-124 is a catalytic residue. Residues 161-230 form the DRBM domain; the sequence is DYKTNLQEFL…AKKALEQLKA (70 aa).

It belongs to the ribonuclease III family. As to quaternary structure, homodimer. The cofactor is Mg(2+).

Its subcellular location is the cytoplasm. The enzyme catalyses Endonucleolytic cleavage to 5'-phosphomonoester.. Digests double-stranded RNA. Involved in the processing of primary rRNA transcript to yield the immediate precursors to the large and small rRNAs (23S and 16S). Processes some mRNAs, and tRNAs when they are encoded in the rRNA operon. Processes pre-crRNA and tracrRNA of type II CRISPR loci if present in the organism. This chain is Ribonuclease 3, found in Latilactobacillus sakei subsp. sakei (strain 23K) (Lactobacillus sakei subsp. sakei).